The primary structure comprises 106 residues: ATP-dependent Clp protease adapter protein ClpS (106 aa).

Belongs to the ClpS family. As to quaternary structure, binds to the N-terminal domain of the chaperone ClpA.

Involved in the modulation of the specificity of the ClpAP-mediated ATP-dependent protein degradation. This Salmonella agona (strain SL483) protein is ATP-dependent Clp protease adapter protein ClpS.